The chain runs to 639 residues: DNA gyrase subunit B (639 aa).

Positions 392–402 (QAEELTRRKSA) are enriched in basic and acidic residues. The disordered stretch occupies residues 392–417 (QAEELTRRKSALESTSLPGKLADCQS). In terms of domain architecture, Toprim spans 423–537 (SELFIVEGDS…AGYVYAAQPP (115 aa)). Mg(2+) contacts are provided by Glu429, Asp502, and Asp504.

This sequence belongs to the type II topoisomerase GyrB family. In terms of assembly, heterotetramer, composed of two GyrA and two GyrB chains. In the heterotetramer, GyrA contains the active site tyrosine that forms a transient covalent intermediate with DNA, while GyrB binds cofactors and catalyzes ATP hydrolysis. Mg(2+) serves as cofactor. It depends on Mn(2+) as a cofactor. Requires Ca(2+) as cofactor.

The protein resides in the cytoplasm. The enzyme catalyses ATP-dependent breakage, passage and rejoining of double-stranded DNA.. Functionally, a type II topoisomerase that negatively supercoils closed circular double-stranded (ds) DNA in an ATP-dependent manner to modulate DNA topology and maintain chromosomes in an underwound state. Negative supercoiling favors strand separation, and DNA replication, transcription, recombination and repair, all of which involve strand separation. Also able to catalyze the interconversion of other topological isomers of dsDNA rings, including catenanes and knotted rings. Type II topoisomerases break and join 2 DNA strands simultaneously in an ATP-dependent manner. The chain is DNA gyrase subunit B from Haloferax lucentense (strain DSM 14919 / JCM 9276 / NCIMB 13854 / Aa 2.2) (Haloferax alicantei).